The chain runs to 359 residues: Membrane-bound lytic murein transglycosylase C (359 aa).

The first 16 residues, 1–16, serve as a signal peptide directing secretion; sequence MKKVLALALIAPLLIS. C17 carries the N-palmitoyl cysteine lipid modification. C17 carries S-diacylglycerol cysteine lipidation.

This sequence belongs to the transglycosylase Slt family.

Its subcellular location is the cell outer membrane. It catalyses the reaction Exolytic cleavage of the (1-&gt;4)-beta-glycosidic linkage between N-acetylmuramic acid (MurNAc) and N-acetylglucosamine (GlcNAc) residues in peptidoglycan, from either the reducing or the non-reducing ends of the peptidoglycan chains, with concomitant formation of a 1,6-anhydrobond in the MurNAc residue.. Murein-degrading enzyme. May play a role in recycling of muropeptides during cell elongation and/or cell division. The protein is Membrane-bound lytic murein transglycosylase C of Edwardsiella ictaluri (strain 93-146).